Here is a 115-residue protein sequence, read N- to C-terminus: T cell receptor delta variable 2 (115 aa).

The signal sequence occupies residues 1–19 (MQRISSLIHLSLFWAGVMS). The 91-residue stretch at 25–115 (PEHQTVPVSI…EGSYYCACDT (91 aa)) folds into the Ig-like domain. The cysteines at positions 42 and 111 are disulfide-linked.

As to quaternary structure, gamma-delta TR is a heterodimer composed of a gamma and delta chain; disulfide-linked. The gamma-delta TR is associated with the transmembrane signaling CD3 coreceptor proteins following the stoichiometry: a single gamma-delta TR heterodimer associates with one CD3D-CD3E heterodimer, one CD3G-CD3E heterodimer and one CD247 homodimer forming a stable octameric structure. Upon activation, gamma-delta TR complex associates with FCER1G to initiate intracellular signaling.

The protein localises to the cell membrane. In terms of biological role, v region of the variable domain of T cell receptor (TR) delta chain that participates in the antigen recognition. Gamma-delta TRs recognize a variety of self and foreign non-peptide antigens frequently expressed at the epithelial boundaries between the host and external environment, including endogenous lipids presented by MH-like protein CD1D and phosphoantigens presented by butyrophilin-like molecule BTN3A1. Upon antigen recognition induces rapid, innate-like immune responses involved in pathogen clearance and tissue repair. Binding of gamma-delta TR complex to antigen triggers phosphorylation of immunoreceptor tyrosine-based activation motifs (ITAMs) in the CD3 chains by the LCK and FYN kinases, allowing the recruitment, phosphorylation, and activation of ZAP70 that facilitates phosphorylation of the scaffolding proteins LCP2 and LAT. This lead to the formation of a supramolecular signalosome that recruits the phospholipase PLCG1, resulting in calcium mobilization and ERK activation, ultimately leading to T cell expansion and differentiation into effector cells. Gamma-delta TRs are produced through somatic rearrangement of a limited repertoire of variable (V), diversity (D), and joining (J) genes. The potential diversity of gamma-delta TRs is conferred by the unique ability to rearrange (D) genes in tandem and to utilize all three reading frames. The combinatorial diversity is considerably increased by the sequence exonuclease trimming and random nucleotide (N) region additions which occur during the V-(D)-J rearrangements. This Homo sapiens (Human) protein is T cell receptor delta variable 2.